The sequence spans 278 residues: MTTILETKNLVYNYPDGTEALKGIDFKLEEGEMISLLGHNGAGKSTLFLHFNGIIEPTSGSVEIDGETLKYDKKSLLAARQKVGIVFQNPDDQLFAPTVLEDVAFGPMNMGLSEEEVKTRSMDALEKVGMSDYAEKPPHHLSGGQKKRVAIAGILSMKPKVMVLDEPTSGLDPNGASSIMQLLYDLNKEGMTIIISTHDVDLVPLYSDDIEVIVDGKIIKSGTCKEIFTDKEVIDEADLRLPWIGQLFEKLDKEHNITFGNGYPLTVSDAYDALLTKL.

An ABC transporter domain is found at 5-240 (LETKNLVYNY…KEVIDEADLR (236 aa)). Residue 38 to 45 (GHNGAGKS) participates in ATP binding.

Belongs to the ABC transporter superfamily. Energy-coupling factor EcfA family. As to quaternary structure, forms a stable energy-coupling factor (ECF) transporter complex composed of 2 membrane-embedded substrate-binding proteins (S component), 2 ATP-binding proteins (A component) and 2 transmembrane proteins (T component).

Its subcellular location is the cell membrane. ATP-binding (A) component of a common energy-coupling factor (ECF) ABC-transporter complex. Unlike classic ABC transporters this ECF transporter provides the energy necessary to transport a number of different substrates. The protein is Energy-coupling factor transporter ATP-binding protein EcfA of Methanosphaera stadtmanae (strain ATCC 43021 / DSM 3091 / JCM 11832 / MCB-3).